Here is a 239-residue protein sequence, read N- to C-terminus: Ribonuclease PH (239 aa).

Residues R86 and 124–126 contribute to the phosphate site; that span reads GTR.

It belongs to the RNase PH family. Homohexameric ring arranged as a trimer of dimers.

It carries out the reaction tRNA(n+1) + phosphate = tRNA(n) + a ribonucleoside 5'-diphosphate. In terms of biological role, phosphorolytic 3'-5' exoribonuclease that plays an important role in tRNA 3'-end maturation. Removes nucleotide residues following the 3'-CCA terminus of tRNAs; can also add nucleotides to the ends of RNA molecules by using nucleoside diphosphates as substrates, but this may not be physiologically important. Probably plays a role in initiation of 16S rRNA degradation (leading to ribosome degradation) during starvation. In Aromatoleum aromaticum (strain DSM 19018 / LMG 30748 / EbN1) (Azoarcus sp. (strain EbN1)), this protein is Ribonuclease PH.